A 172-amino-acid polypeptide reads, in one-letter code: Large ribosomal subunit protein uL10 (172 aa).

It belongs to the universal ribosomal protein uL10 family. In terms of assembly, part of the ribosomal stalk of the 50S ribosomal subunit. The N-terminus interacts with L11 and the large rRNA to form the base of the stalk. The C-terminus forms an elongated spine to which L12 dimers bind in a sequential fashion forming a multimeric L10(L12)X complex.

In terms of biological role, forms part of the ribosomal stalk, playing a central role in the interaction of the ribosome with GTP-bound translation factors. The polypeptide is Large ribosomal subunit protein uL10 (Rhodopseudomonas palustris (strain BisA53)).